Here is a 2334-residue protein sequence, read N- to C-terminus: Centriolin (2334 aa).

The interval 1-70 is disordered; it reads MKKGSERRLS…ESTVPLEPQQ (70 aa). The segment covering 21–38 has biased composition (low complexity); sequence PGPSSLRSSMRSRSLSPL. 4 LRR repeats span residues 126-147, 148-169, 170-191, and 194-215; these read KLEV…DKLL, RLRE…ENMC, NLQK…FAKK, and SLRV…SKLK. The 39-residue stretch at 228–266 folds into the LRRCT domain; the sequence is NPVVALPHYLQFIIFHLRSLESLEGQPVTTQDRQEAFER. 2 coiled-coil regions span residues 265 to 343 and 437 to 800; these read ERFS…VELT and DLQL…LNHV. Disordered stretches follow at residues 542-562 and 751-771; these read DSLD…RGKE and SLRD…ENNE. Phosphoserine is present on serine 832. Positions 858–1102 form a coiled coil; that stretch reads EKEEAQVRER…ITRLRDVLNL (245 aa). Disordered stretches follow at residues 1154 to 1198, 1213 to 1245, and 1338 to 1360; these read SKVS…PLPA, KSFS…VPPP, and LKSK…EEVD. Positions 1227–1238 are enriched in acidic residues; the sequence is SQEESGLDDQEE. Residues 1320-2169 adopt a coiled-coil conformation; sequence EHHNLENEVS…MRTLKSEVKD (850 aa). Serine 1478 is modified (phosphoserine). A required for centrosome localization region spans residues 1951–2121; it reads MMFQKLQKER…ELVAQDNHER (171 aa). The segment at 1988–2334 is sufficient for interaction with HOOK2; sequence QKSRLKQLLT…PLEEPNSYRH (347 aa). Positions 2291 to 2307 are enriched in low complexity; that stretch reads TSTSTDSASSPSLPSLV. Positions 2291-2334 are disordered; the sequence is TSTSTDSASSPSLPSLVEDSQHGHSQSSFQVLQVPLEEPNSYRH.

As to quaternary structure, interacts with HOOK2. Interacts with EXOC6 and SNAPIN. Associates with the exocyst complex. Highly expressed in liver.

It localises to the cytoplasm. It is found in the cytoskeleton. Its subcellular location is the microtubule organizing center. The protein resides in the centrosome. The protein localises to the midbody. It localises to the midbody ring. Its function is as follows. Involved in cell cycle progression and cytokinesis. During the late steps of cytokinesis, anchors exocyst and SNARE complexes at the midbody, thereby allowing secretory vesicle-mediated abscission. The chain is Centriolin (Cntrl) from Mus musculus (Mouse).